Reading from the N-terminus, the 271-residue chain is Delta(7)-sterol-C5(6)-desaturase (271 aa).

2 helical membrane-spanning segments follow: residues 44-64 (IGGV…IYHL) and 120-140 (VGWL…EFGI). The 130-residue stretch at 130-259 (AIYLVIVEFG…TIWMDWMFGT (130 aa)) folds into the Fatty acid hydroxylase domain. Residues 144 to 148 (HMELH) carry the Histidine box-1 motif. Positions 158–162 (HATHH) match the Histidine box-2 motif. The helical transmembrane segment at 190–210 (HVVALLLVPMHFSTHIALIFL) threads the bilayer. The short motif at 235–239 (HTIHH) is the Histidine box-3 element.

Belongs to the sterol desaturase family. Fe cation serves as cofactor.

Its subcellular location is the endoplasmic reticulum membrane. The catalysed reaction is a Delta(7)-sterol + 2 Fe(II)-[cytochrome b5] + O2 + 2 H(+) = a Delta(5),Delta(7)-sterol + 2 Fe(III)-[cytochrome b5] + 2 H2O. Functionally, involved in the biosynthesis of sitosterol and campesterol. This is Delta(7)-sterol-C5(6)-desaturase from Nicotiana tabacum (Common tobacco).